We begin with the raw amino-acid sequence, 556 residues long: Portal protein (556 aa).

The interval Ala527 to Gln556 is disordered. The span at Leu533–Ser542 shows a compositional bias: polar residues.

This sequence belongs to the podoviridae head-to-tail connector protein family. Homododecamer.

The protein resides in the virion. Functionally, forms the portal vertex of the capsid. This portal plays critical roles in head assembly, genome packaging, neck/tail attachment, and genome ejection. The portal protein multimerizes as a single ring-shaped homododecamer arranged around a central channel. This Salmonella phage epsilon15 protein is Portal protein.